A 119-amino-acid chain; its full sequence is Large ribosomal subunit protein uL18 (119 aa).

This sequence belongs to the universal ribosomal protein uL18 family. As to quaternary structure, part of the 50S ribosomal subunit; part of the 5S rRNA/L5/L18/L25 subcomplex. Contacts the 5S and 23S rRNAs.

Its function is as follows. This is one of the proteins that bind and probably mediate the attachment of the 5S RNA into the large ribosomal subunit, where it forms part of the central protuberance. The sequence is that of Large ribosomal subunit protein uL18 from Clostridium perfringens (strain 13 / Type A).